Consider the following 435-residue polypeptide: MAQTVPPCELPCKEYDVARNTGAYTSSGLATASFRTSKYLLEEWFQNCYARYHQAFADRDQSERQRHESQQLATETQALAQRTQQDSTRTVGERLQDTHSWKSELQREMEALAAETNLLLAQKQRLERALDATEVPFSITTDNLQCRERREHPNLVRDHVETELLKEAELIRNIQELLKRTIMQAVSQIRLNREHKETCEMDWSDKMEAYNIDETCGRHHSQSTEVQAHPYSTTFQESASTPETRAKFTQDNLCRAQRERLASANLRVLVDCILRDTSEDLRLQCDAVNLAFGRRCEELEDARYKLHHHLHKTLREITDQEHNVAALKQAIKDKEAPLHVAQTRLYLRSHRPNMELCRDAAQFRLLSEVEELNMSLTALREKLLEAEQSLRNLEDIHMSLEKDIAAMTNSLFIDRQKCMAHRTRYPTILQLAGYQ.

Positions aspartate 60–serine 69 are enriched in basic and acidic residues. The tract at residues aspartate 60–glutamine 96 is disordered. Residues glutamine 70–glutamine 85 show a composition bias toward low complexity. Coiled-coil stretches lie at residues lysine 102–arginine 180, leucine 310–alanine 336, and phenylalanine 363–leucine 411.

It belongs to the tektin family. As to quaternary structure, microtubule inner protein component of sperm flagellar doublet microtubules. Post-translationally, ubiquitinated, leading to its degradation. Deubiquitinated by USP16, promoting its stability. In terms of tissue distribution, strongly expressed in spermatozoa. Also detected at low levels in pancreas. Expressed in airway epithelial cells.

It is found in the cytoplasm. The protein localises to the cytoskeleton. Its subcellular location is the cilium axoneme. The protein resides in the flagellum axoneme. Its function is as follows. Microtubule inner protein (MIP) part of the dynein-decorated doublet microtubules (DMTs) in cilia and flagellar axoneme. Forms filamentous polymers in the walls of ciliary and flagellar microtubules. Contributes to normal sperm motility. The sequence is that of Tektin-4 from Homo sapiens (Human).